The following is a 244-amino-acid chain: Small ribosomal subunit protein eS4 (244 aa).

Residues 43 to 106 (LPLLLVVRDI…DENYLVLFDE (64 aa)) form the S4 RNA-binding domain.

The protein belongs to the eukaryotic ribosomal protein eS4 family.

In Methanococcus maripaludis (strain C6 / ATCC BAA-1332), this protein is Small ribosomal subunit protein eS4.